The chain runs to 329 residues: 4-hydroxythreonine-4-phosphate dehydrogenase (329 aa).

The substrate site is built by His-136 and Thr-137. 3 residues coordinate a divalent metal cation: His-166, His-211, and His-266. Substrate contacts are provided by Lys-274, Asn-283, and Arg-292.

Belongs to the PdxA family. In terms of assembly, homodimer. It depends on Zn(2+) as a cofactor. Mg(2+) is required as a cofactor. Requires Co(2+) as cofactor.

The protein localises to the cytoplasm. It catalyses the reaction 4-(phosphooxy)-L-threonine + NAD(+) = 3-amino-2-oxopropyl phosphate + CO2 + NADH. It participates in cofactor biosynthesis; pyridoxine 5'-phosphate biosynthesis; pyridoxine 5'-phosphate from D-erythrose 4-phosphate: step 4/5. Functionally, catalyzes the NAD(P)-dependent oxidation of 4-(phosphooxy)-L-threonine (HTP) into 2-amino-3-oxo-4-(phosphooxy)butyric acid which spontaneously decarboxylates to form 3-amino-2-oxopropyl phosphate (AHAP). In Shigella sonnei (strain Ss046), this protein is 4-hydroxythreonine-4-phosphate dehydrogenase.